We begin with the raw amino-acid sequence, 116 residues long: Large ribosomal subunit protein P2 (116 aa).

The interval 60 to 116 (GKLSSMPSGGGVAAAAGGGGAAAGGGGAAPAAEEKKEEKKEESEEESDDDMGFGLFD) is disordered. Over residues 67–87 (SGGGVAAAAGGGGAAAGGGGA) the composition is skewed to gly residues. Positions 91–101 (AEEKKEEKKEE) are enriched in basic and acidic residues.

Belongs to the eukaryotic ribosomal protein P1/P2 family. As to quaternary structure, P1 and P2 exist as dimers at the large ribosomal subunit. Phosphorylated.

Functionally, plays an important role in the elongation step of protein synthesis. The protein is Large ribosomal subunit protein P2 of Branchiostoma floridae (Florida lancelet).